Consider the following 313-residue polypeptide: Malate dehydrogenase (313 aa).

NAD(+) is bound by residues 8–13 (GAGNVG) and Asp33. Arg83 and Arg89 together coordinate substrate. Residues Asn96 and 119 to 121 (ISN) each bind NAD(+). The substrate site is built by Asn121 and Arg152. The active-site Proton acceptor is His176.

It belongs to the LDH/MDH superfamily. MDH type 3 family.

The catalysed reaction is (S)-malate + NAD(+) = oxaloacetate + NADH + H(+). In terms of biological role, catalyzes the reversible oxidation of malate to oxaloacetate. This Bacteroides fragilis (strain ATCC 25285 / DSM 2151 / CCUG 4856 / JCM 11019 / LMG 10263 / NCTC 9343 / Onslow / VPI 2553 / EN-2) protein is Malate dehydrogenase.